Here is an 857-residue protein sequence, read N- to C-terminus: MSEAMVFSKIDEYTLFMSRSLQKSLKTFAEQVMALIYQYKDTLVEDRLALTNTLDEAVQILVDSGKEEADKLGFNIYSAVSRYISEIWASQSGQTTAAPPATDIDGLHRQLVALKNSLGQNAELYEQRCQLQAELRELQEFSENPAAAVEEIMQLKAQIDELKYGASNHNALVQEKRDLERHLADLRLSRQDTNSRLPQEIDRLRAEIEDEKRNLPHMDDLQRQRDELQRQLDTIRRRGNTSGVMAEIENIQRQIDDANSSASSEHELRMLRAEVETLRAQKSIVTRLEAENADLRRELQDIRGRAQEMSASQRYSANQAQELQEKAMQAEELLQQKIELRRQLHEALERADAGEAALRDKRRLEDEIKGLQLRLTENDFTKERSILRNEIQAKTTEIDTLISDRRALETKLLNKEAEVDQLLYEKQLLKTELNSYRGTNEDIDKLTFEKRQLVEELNDLREKTIKYDQLAREKAALETELKENSYNFDQLLEQKQQMRSDLNALREKAADYERVDRELRLKDKELEEKNAEIERLLEDRRVMRTELLHSKESATDVDSLIQEKRLRDRELAHLRDRMSEYERVVEERIQKEKENNLLKQRITELEQQQRTATVRETEMSALREKANELDGYNRERQAREHEINMLRDKALESDKLRQDNRVMAMELTELREKVQLLEKLQYEKRARDVEMLELRHKAMDVDTLVEEKQRLEMRLAELKIKVNNYDQLADDKARLQEQLKEMSDKLIEFEMIMDDNRRLKLQVKELDLKTANMEKLYEEYKKLEDQLKATKAMTSTGMGVSAASPAFYKTKSMRLTQQNNQMKNTTDNLLTRDIPKLIDKLIERPAGTTTMGRSGKF.

Coiled-coil stretches lie at residues 169–546 and 571–793; these read HNAL…MRTE and LAHL…TKAM.

It localises to the cytoplasm. It is found in the cytoskeleton. In terms of biological role, structural component of the ventral disk involved in maintanance of a domed conformation of the disk required for proper attachment. May have a role in immobilizing the microtubules between cell divisions. The protein is Median body protein of Giardia intestinalis (strain ATCC 50803 / WB clone C6) (Giardia lamblia).